Consider the following 201-residue polypeptide: Large ribosomal subunit protein uL4 (201 aa).

The tract at residues 44-71 (RAQKTRAEVTGSGKKPWRQKGTGRARSG) is disordered.

It belongs to the universal ribosomal protein uL4 family. Part of the 50S ribosomal subunit.

Its function is as follows. One of the primary rRNA binding proteins, this protein initially binds near the 5'-end of the 23S rRNA. It is important during the early stages of 50S assembly. It makes multiple contacts with different domains of the 23S rRNA in the assembled 50S subunit and ribosome. Functionally, forms part of the polypeptide exit tunnel. The polypeptide is Large ribosomal subunit protein uL4 (Shigella flexneri serotype 5b (strain 8401)).